The chain runs to 507 residues: MTLSIQSLASIAIELQSGLTQRDRFQRLINSLRSLLRCDASALLRFEGQQFRPLAIDGLAQDVLGRRFALDAHPRLEAIARAGGVVRFPADSELPDPYDGLIPGHDQLKVHACIGLPLFAEQDLIGALTFDSLDPMQFDRFSDEELRLISALAAGALNNALLVEALERQALSPLASPGGSSPRENDEIIGLSSVMQQLKQEISIVAGSELNVLITGETGVGKELVVRAIHQGSARAANPLVYLNCAALPESVAESELFGHVKGAFTGAIQHRAGKFEMADNGTLFLDEIGELSLSLQAKLLRVIQYGDLQRVGDDRVKRVNVRILAATNRDLKQAAVDGAFRLDLYHRLSVFPLAVPPLRERVSDIALLAGYFCERCRIKLGLMQLTLSVQALSALEQYSWPGNIRELEHSIYRAAILARAEQSSSELQLLPAHFTIKAGALPARIIDDALPESAIGVSLATLTQHFQRSVIEKTLVECEMNWAATARKLELDSGNLHRLAKRLNMK.

At Asp57 the chain carries 4-aspartylphosphate. Residues 188-417 (IIGLSSVMQQ…LEHSIYRAAI (230 aa)) enclose the Sigma-54 factor interaction domain. Residues 216-223 (GETGVGKE) and 279-288 (ADNGTLFLDE) each bind ATP. Residues 483 to 502 (WAATARKLELDSGNLHRLAK) constitute a DNA-binding region (H-T-H motif).

It participates in nitrogen metabolism; nitric oxide reduction. Functionally, required for the expression of anaerobic nitric oxide (NO) reductase, acts as a transcriptional activator for at least the norVW operon. Activation also requires sigma-54. The protein is Anaerobic nitric oxide reductase transcription regulator NorR of Serratia proteamaculans (strain 568).